A 266-amino-acid chain; its full sequence is Glucagon-1 (266 aa).

The first 20 residues, 1 to 20, serve as a signal peptide directing secretion; sequence MKSTCYMIGILLMILQNTYQ. Propeptides lie at residues 21-50, 84-95, 136-140, 175-178, 213-224, and 261-266; these read SPVP…LKEV, SGELSRRNADYE, NAEFE, IRYS, NFSEVHSVEEMD, and DLLEEQ. The span at 23–32 shows a compositional bias: polar residues; the sequence is VPETDANSRS. The interval 23 to 44 is disordered; that stretch reads VPETDANSRSVKAARNEAVDDS.

It belongs to the glucagon family.

It is found in the secreted. Functionally, promotes hydrolysis of glycogen and lipids, and raises the blood sugar level. The polypeptide is Glucagon-1 (gcg1) (Xenopus laevis (African clawed frog)).